The chain runs to 161 residues: Large ribosomal subunit protein uL15 (161 aa).

The segment at 1 to 43 is disordered; the sequence is MKLSEIADNVGSRKKRMRIGRGIGSGKGKTGGRGGKGQTARSG. Residues 21-37 are compositionally biased toward gly residues; the sequence is RGIGSGKGKTGGRGGKG.

Part of the 50S ribosomal subunit.

Its function is as follows. Binds to the 23S rRNA. The polypeptide is Large ribosomal subunit protein uL15 (Rhodopseudomonas palustris (strain ATCC BAA-98 / CGA009)).